Consider the following 285-residue polypeptide: Probable endonuclease 4 (285 aa).

Zn(2+)-binding residues include histidine 69, histidine 109, glutamate 145, aspartate 179, histidine 182, histidine 216, aspartate 229, histidine 231, and glutamate 261.

It belongs to the AP endonuclease 2 family. The cofactor is Zn(2+).

The enzyme catalyses Endonucleolytic cleavage to 5'-phosphooligonucleotide end-products.. Endonuclease IV plays a role in DNA repair. It cleaves phosphodiester bonds at apurinic or apyrimidinic (AP) sites, generating a 3'-hydroxyl group and a 5'-terminal sugar phosphate. This is Probable endonuclease 4 from Salmonella dublin (strain CT_02021853).